The chain runs to 241 residues: Chloride intracellular channel protein 1 (241 aa).

Alanine 2 carries the N-acetylalanine modification. A required for insertion into the membrane region spans residues alanine 2–proline 90. Lysine 13 is subject to N6-acetyllysine. Positions cysteine 24–serine 27 match the G-site motif. Cysteines 24 and 59 form a disulfide. Residues phenylalanine 26 to valine 46 traverse the membrane as a helical segment. Positions tyrosine 93 to tyrosine 233 constitute a GST C-terminal domain. Lysine 119 carries the post-translational modification N6-acetyllysine. Phosphoserine is present on serine 121. Position 131 is an N6-acetyllysine (lysine 131). Phosphoserine occurs at positions 156 and 211. A Phosphotyrosine modification is found at tyrosine 233.

The protein belongs to the chloride channel CLIC family. In terms of assembly, monomer. Homodimer (in vitro). Interacts with TRAPPC2. Dimerization requires a conformation change that leads to the exposure of a large hydrophobic surface. In vivo, this may lead to membrane insertion. As to expression, expressed in neonatal and adult cardiomyocytes (at protein level).

It is found in the nucleus. The protein resides in the nucleus membrane. Its subcellular location is the cytoplasm. It localises to the cell membrane. The protein localises to the endoplasmic reticulum. It carries out the reaction L-dehydroascorbate + 2 glutathione = glutathione disulfide + L-ascorbate. It catalyses the reaction chloride(in) = chloride(out). The catalysed reaction is iodide(out) = iodide(in). The enzyme catalyses thiocyanate(in) = thiocyanate(out). It carries out the reaction nitrate(in) = nitrate(out). It catalyses the reaction bromide(in) = bromide(out). The catalysed reaction is fluoride(in) = fluoride(out). In the soluble state, catalyzes glutaredoxin-like thiol disulfide exchange reactions with reduced glutathione as electron donor. Reduces selenite and dehydroascorbate and may act as an antioxidant during oxidative stress response. Can insert into membranes and form voltage-dependent multi-ion conductive channels. Membrane insertion seems to be redox-regulated and may occur only under oxidizing conditions. Involved in regulation of the cell cycle. The chain is Chloride intracellular channel protein 1 from Rattus norvegicus (Rat).